The sequence spans 470 residues: Glutamate--tRNA ligase (470 aa).

A 'HIGH' region motif is present at residues 12 to 22; the sequence is PSPTGIFHVGG. Residues Cys103, Cys105, Cys125, and Asp127 each contribute to the Zn(2+) site. The 'KMSKS' region motif lies at 236-240; that stretch reads KLSKR. Lys239 contacts ATP.

It belongs to the class-I aminoacyl-tRNA synthetase family. Glutamate--tRNA ligase type 1 subfamily. As to quaternary structure, monomer. Zn(2+) is required as a cofactor.

It is found in the cytoplasm. It carries out the reaction tRNA(Glu) + L-glutamate + ATP = L-glutamyl-tRNA(Glu) + AMP + diphosphate. In terms of biological role, catalyzes the attachment of glutamate to tRNA(Glu) in a two-step reaction: glutamate is first activated by ATP to form Glu-AMP and then transferred to the acceptor end of tRNA(Glu). The polypeptide is Glutamate--tRNA ligase (Frankia alni (strain DSM 45986 / CECT 9034 / ACN14a)).